Reading from the N-terminus, the 94-residue chain is Aspartyl/glutamyl-tRNA(Asn/Gln) amidotransferase subunit C (94 aa).

Belongs to the GatC family. As to quaternary structure, heterotrimer of A, B and C subunits.

The catalysed reaction is L-glutamyl-tRNA(Gln) + L-glutamine + ATP + H2O = L-glutaminyl-tRNA(Gln) + L-glutamate + ADP + phosphate + H(+). It carries out the reaction L-aspartyl-tRNA(Asn) + L-glutamine + ATP + H2O = L-asparaginyl-tRNA(Asn) + L-glutamate + ADP + phosphate + 2 H(+). Functionally, allows the formation of correctly charged Asn-tRNA(Asn) or Gln-tRNA(Gln) through the transamidation of misacylated Asp-tRNA(Asn) or Glu-tRNA(Gln) in organisms which lack either or both of asparaginyl-tRNA or glutaminyl-tRNA synthetases. The reaction takes place in the presence of glutamine and ATP through an activated phospho-Asp-tRNA(Asn) or phospho-Glu-tRNA(Gln). The polypeptide is Aspartyl/glutamyl-tRNA(Asn/Gln) amidotransferase subunit C (Campylobacter jejuni subsp. doylei (strain ATCC BAA-1458 / RM4099 / 269.97)).